The chain runs to 475 residues: Ribulose bisphosphate carboxylase large chain (475 aa).

Positions 1–2 (MS) are excised as a propeptide. Residue proline 3 is modified to N-acetylproline. Lysine 14 bears the N6,N6,N6-trimethyllysine mark. Substrate contacts are provided by asparagine 123 and threonine 173. The active-site Proton acceptor is the lysine 175. Residue lysine 177 participates in substrate binding. Mg(2+) is bound by residues lysine 201, aspartate 203, and glutamate 204. Lysine 201 bears the N6-carboxylysine mark. Catalysis depends on histidine 294, which acts as the Proton acceptor. 3 residues coordinate substrate: arginine 295, histidine 327, and serine 379.

The protein belongs to the RuBisCO large chain family. Type I subfamily. Heterohexadecamer of 8 large chains and 8 small chains; disulfide-linked. The disulfide link is formed within the large subunit homodimers. Mg(2+) is required as a cofactor. Post-translationally, the disulfide bond which can form in the large chain dimeric partners within the hexadecamer appears to be associated with oxidative stress and protein turnover.

It is found in the plastid. Its subcellular location is the chloroplast. It catalyses the reaction 2 (2R)-3-phosphoglycerate + 2 H(+) = D-ribulose 1,5-bisphosphate + CO2 + H2O. It carries out the reaction D-ribulose 1,5-bisphosphate + O2 = 2-phosphoglycolate + (2R)-3-phosphoglycerate + 2 H(+). In terms of biological role, ruBisCO catalyzes two reactions: the carboxylation of D-ribulose 1,5-bisphosphate, the primary event in carbon dioxide fixation, as well as the oxidative fragmentation of the pentose substrate in the photorespiration process. Both reactions occur simultaneously and in competition at the same active site. The chain is Ribulose bisphosphate carboxylase large chain from Fagopyrum esculentum subsp. ancestrale (Wild buckwheat).